The primary structure comprises 231 residues: Protoporphyrinogen IX dehydrogenase [quinone] (231 aa).

The 171-residue stretch at 8-178 folds into the Flavodoxin-like domain; that stretch reads CLMLYSTTDG…AVRRFASDFA (171 aa). Residues 14–18 and 90–158 each bind FMN; these read TTDGH and FFSV…ETDS. The chain crosses the membrane as a helical span at residues 208-228; the sequence is CLLAIVGMSAAVIVGIRIIAA.

It belongs to the HemG family. The cofactor is FMN.

Its subcellular location is the membrane. The catalysed reaction is protoporphyrinogen IX + 3 a menaquinone = protoporphyrin IX + 3 a menaquinol. It catalyses the reaction protoporphyrinogen IX + 3 a ubiquinone = protoporphyrin IX + 3 a ubiquinol. The enzyme catalyses protoporphyrinogen IX + 3 a quinone = protoporphyrin IX + 3 a quinol. It participates in porphyrin-containing compound metabolism; protoporphyrin-IX biosynthesis; protoporphyrin-IX from protoporphyrinogen-IX: step 1/1. Its function is as follows. In E.coli extracts under anerobic conditions catalyzes the 6-electron oxidation of protoporphyrinogen IX to form protoporphyrin IX, transferring electrons to fumarate reductase, presumably via menaquinone. In vitro under aerobic conditions forms protoporphyrin IX using ubiquinone as an electron acceptor. Complements an E.coli hemG deletion, allowing normal growth in vivo. This chain is Protoporphyrinogen IX dehydrogenase [quinone], found in Leishmania major.